A 123-amino-acid chain; its full sequence is MRFLGVNLPDNKAVVVALTYLYGIGLPTARKICSSLAIDGSAKLPDLEQEQLNSIMAYIKNDIPFEGELRKSVAFSIKHLVDIKCYRGVRHRKNLPVRGQRTRTNARTRKGKVRVPIAAKKRV.

The protein belongs to the universal ribosomal protein uS13 family. As to quaternary structure, part of the 30S ribosomal subunit. Forms a loose heterodimer with protein S19. Forms two bridges to the 50S subunit in the 70S ribosome.

Its function is as follows. Located at the top of the head of the 30S subunit, it contacts several helices of the 16S rRNA. In the 70S ribosome it contacts the 23S rRNA (bridge B1a) and protein L5 of the 50S subunit (bridge B1b), connecting the 2 subunits; these bridges are implicated in subunit movement. Contacts the tRNAs in the A and P-sites. The polypeptide is Small ribosomal subunit protein uS13 (Neorickettsia sennetsu (strain ATCC VR-367 / Miyayama) (Ehrlichia sennetsu)).